A 1370-amino-acid polypeptide reads, in one-letter code: DNA-directed RNA polymerase subunit beta (1370 aa).

This sequence belongs to the RNA polymerase beta chain family. The RNAP catalytic core consists of 2 alpha, 1 beta, 1 beta' and 1 omega subunit. When a sigma factor is associated with the core the holoenzyme is formed, which can initiate transcription.

The catalysed reaction is RNA(n) + a ribonucleoside 5'-triphosphate = RNA(n+1) + diphosphate. In terms of biological role, DNA-dependent RNA polymerase catalyzes the transcription of DNA into RNA using the four ribonucleoside triphosphates as substrates. The chain is DNA-directed RNA polymerase subunit beta from Delftia acidovorans (strain DSM 14801 / SPH-1).